A 96-amino-acid polypeptide reads, in one-letter code: uncharacterized protein (96 aa).

Residues 1 to 19 (MKFLSALLLIVLLISVVFG) form the signal peptide. An N-linked (GlcNAc...) asparagine glycan is attached at N20. The segment covering 27–46 (AWATTTTGGTTGSQTSPATH) has biased composition (low complexity). The interval 27–58 (AWATTTTGGTTGSQTSPATHGGHGGNGGNGHS) is disordered. The segment covering 47-56 (GGHGGNGGNG) has biased composition (gly residues).

Its subcellular location is the secreted. This is an uncharacterized protein from Dictyostelium discoideum (Social amoeba).